The following is a 275-amino-acid chain: Hemin import ATP-binding protein HmuV (275 aa).

In terms of domain architecture, ABC transporter spans 2–242 (LKAAGIGVRL…EWIETGFGLQ (241 aa)). Residue 34–41 (GPNGAGKS) coordinates ATP.

Belongs to the ABC transporter superfamily. Heme (hemin) importer (TC 3.A.1.14.5) family. As to quaternary structure, the complex is composed of two ATP-binding proteins (HmuV), two transmembrane proteins (HmuU) and a solute-binding protein (HmuT).

Its subcellular location is the cell inner membrane. Functionally, part of the ABC transporter complex HmuTUV involved in hemin import. Responsible for energy coupling to the transport system. The polypeptide is Hemin import ATP-binding protein HmuV (Gloeobacter violaceus (strain ATCC 29082 / PCC 7421)).